The following is a 155-amino-acid chain: Ribosomal RNA large subunit methyltransferase H (155 aa).

S-adenosyl-L-methionine is bound by residues Leu-72, Gly-103, and 122–127; that span reads LSPLTL.

It belongs to the RNA methyltransferase RlmH family. In terms of assembly, homodimer.

The protein localises to the cytoplasm. The catalysed reaction is pseudouridine(1915) in 23S rRNA + S-adenosyl-L-methionine = N(3)-methylpseudouridine(1915) in 23S rRNA + S-adenosyl-L-homocysteine + H(+). Functionally, specifically methylates the pseudouridine at position 1915 (m3Psi1915) in 23S rRNA. The sequence is that of Ribosomal RNA large subunit methyltransferase H from Actinobacillus pleuropneumoniae serotype 5b (strain L20).